A 151-amino-acid polypeptide reads, in one-letter code: Large ribosomal subunit protein bL9 (151 aa).

This sequence belongs to the bacterial ribosomal protein bL9 family.

Functionally, binds to the 23S rRNA. The protein is Large ribosomal subunit protein bL9 of Desulfosudis oleivorans (strain DSM 6200 / JCM 39069 / Hxd3) (Desulfococcus oleovorans).